The sequence spans 132 residues: Small ribosomal subunit protein uS8 (132 aa).

This sequence belongs to the universal ribosomal protein uS8 family. Part of the 30S ribosomal subunit. Contacts proteins S5 and S12.

In terms of biological role, one of the primary rRNA binding proteins, it binds directly to 16S rRNA central domain where it helps coordinate assembly of the platform of the 30S subunit. The polypeptide is Small ribosomal subunit protein uS8 (Streptococcus agalactiae serotype Ia (strain ATCC 27591 / A909 / CDC SS700)).